A 123-amino-acid polypeptide reads, in one-letter code: Ribosome-binding factor A (123 aa).

The protein belongs to the RbfA family. Monomer. Binds 30S ribosomal subunits, but not 50S ribosomal subunits or 70S ribosomes.

Its subcellular location is the cytoplasm. In terms of biological role, one of several proteins that assist in the late maturation steps of the functional core of the 30S ribosomal subunit. Associates with free 30S ribosomal subunits (but not with 30S subunits that are part of 70S ribosomes or polysomes). Required for efficient processing of 16S rRNA. May interact with the 5'-terminal helix region of 16S rRNA. The sequence is that of Ribosome-binding factor A from Legionella pneumophila (strain Paris).